Consider the following 336-residue polypeptide: Peroxidase 11 (336 aa).

A signal peptide spans 1 to 20 (MMRLLFVFFMVHTIFIPCFS). Intrachain disulfides connect Cys-39–Cys-119, Cys-72–Cys-77, Cys-125–Cys-331, and Cys-204–Cys-236. His-70 (proton acceptor) is an active-site residue. Ca(2+)-binding residues include Asp-71, Val-74, Gly-76, Asp-78, and Ser-80. Pro-167 is a binding site for substrate. Residue His-197 participates in heme b binding. Position 198 (Thr-198) interacts with Ca(2+). Asn-246 carries N-linked (GlcNAc...) asparagine glycosylation. Ca(2+) is bound by residues Asp-251, Thr-254, and Asp-259.

Belongs to the peroxidase family. Classical plant (class III) peroxidase subfamily. It depends on heme b as a cofactor. Requires Ca(2+) as cofactor. As to expression, expressed in roots and stems.

It localises to the secreted. The enzyme catalyses 2 a phenolic donor + H2O2 = 2 a phenolic radical donor + 2 H2O. Functionally, removal of H(2)O(2), oxidation of toxic reductants, biosynthesis and degradation of lignin, suberization, auxin catabolism, response to environmental stresses such as wounding, pathogen attack and oxidative stress. These functions might be dependent on each isozyme/isoform in each plant tissue. The sequence is that of Peroxidase 11 (PER11) from Arabidopsis thaliana (Mouse-ear cress).